The following is a 212-amino-acid chain: Glutathione S-transferase hmp2 (212 aa).

Residues 1–80 (MVIKLYGSAM…YLARKYDSGT (80 aa)) form the GST N-terminal domain. Residues 51-52 (KV) and 64-65 (ES) each bind glutathione. A GST C-terminal domain is found at 88–212 (DHEAYGRFEQ…TWIKATAEAR (125 aa)).

Belongs to the GST superfamily.

The catalysed reaction is RX + glutathione = an S-substituted glutathione + a halide anion + H(+). The protein operates within secondary metabolite biosynthesis. In terms of biological role, glutathione S-transferase; part of the gene cluster that mediates the biosynthesis of hypothemycin, a resorcylic acid lactone (RAL) that irreversibly inhibits a subset of protein kinases with a conserved cysteine in the ATP binding site such as human ERK2. The first step is performed by both PKSs hmp3 and hmp8 and leads to the production of 7',8'-dehydrozearalenol (DHZ). The highly reducing PKS hpm8 synthesizes the reduced hexaketide (7S,11S,2E,8E)-7,11-dihydroxy-dodeca-2,8-dienoate, which is transferred downstream to the non-reducing PKS hpm3. Hpm3 then extends the reduced hexaketide to a nonaketide, after which regioselective cyclization and macrolactonization affords DHZ. The next step is the conversion of DHZ into aigialomycin C and is performed by the O-methyltransferase hmp5, the FAD-binding monooxygenase hmp7, and the cytochrome P450 monooxygenase hmp1. The wide substrate tolerance of the hmp5 and hmp7 implies that the reactions from DHZ to aigialomycin C can occur in any order. The steps from aigialomycin C to hypothemycin are less well established. The FAD-linked oxidoreductase hmp9 presumably catalyzes oxidation of the C-6' hydroxyl to a ketone. The timing of this oxidation is important, since the resulting enone functional group is a Michael acceptor that can react spontaneously with glutathione, an abundant metabolite in fungal cells. The glutathione S-transferase hmp2 catalyzes cis-trans isomerization of the 7',8' double bond with equilibrium favoring the trans isomer. The hpm6-encoded transporter might preferentially pump hypothemycin out of the cell relative to the trans isomer aigialomycin A. The cis-to-trans isomerization may be coupled with C-4' hydroxylation, since all known hypothemycin analogs containing the enone functional group also have hydroxyl groups at both C-4' and C-5'. This is Glutathione S-transferase hmp2 from Hypomyces subiculosus (Nectria subiculosa).